Consider the following 280-residue polypeptide: 4-diphosphocytidyl-2-C-methyl-D-erythritol kinase (280 aa).

Residue K8 is part of the active site. Residue 91 to 101 (PVSAGLAGGST) coordinates ATP. D133 is an active-site residue.

Belongs to the GHMP kinase family. IspE subfamily.

It catalyses the reaction 4-CDP-2-C-methyl-D-erythritol + ATP = 4-CDP-2-C-methyl-D-erythritol 2-phosphate + ADP + H(+). Its pathway is isoprenoid biosynthesis; isopentenyl diphosphate biosynthesis via DXP pathway; isopentenyl diphosphate from 1-deoxy-D-xylulose 5-phosphate: step 3/6. In terms of biological role, catalyzes the phosphorylation of the position 2 hydroxy group of 4-diphosphocytidyl-2C-methyl-D-erythritol. The protein is 4-diphosphocytidyl-2-C-methyl-D-erythritol kinase of Clostridium botulinum (strain Alaska E43 / Type E3).